A 419-amino-acid chain; its full sequence is Erythromycin esterase type II (419 aa).

This enzyme confers resistance to erythromycin through inactivation by hydrolyzing the lactone ring of the antibiotic. The chain is Erythromycin esterase type II (ereB) from Escherichia coli.